A 122-amino-acid polypeptide reads, in one-letter code: Large ribosomal subunit protein bL17 (122 aa).

It belongs to the bacterial ribosomal protein bL17 family. As to quaternary structure, part of the 50S ribosomal subunit. Contacts protein L32.

The sequence is that of Large ribosomal subunit protein bL17 from Staphylococcus aureus (strain Mu3 / ATCC 700698).